We begin with the raw amino-acid sequence, 235 residues long: Transmembrane emp24 domain-containing protein 9 (235 aa).

The first 37 residues, 1–37 (MAVELGVLLVRPRPGTGLGRVMRTLLLVLWLATRGSA), serve as a signal peptide directing secretion. Residues 38–202 (LYFHIGETEK…RQTSESTNQR (165 aa)) lie on the Lumenal side of the membrane. The region spanning 47–145 (KKCFIEEIPD…MLRVHLDIQV (99 aa)) is the GOLD domain. The required for interaction with STX17 stretch occupies residues 121-160 (CLHSNSTKFSLFAGGMLRVHLDIQVGEHANDYAEIAAKDK). Asn-125 is a glycosylation site (N-linked (GlcNAc...) asparagine). Positions 154–184 (EIAAKDKLSELQLRVRQLVEQVEQIQKEQNY) form a coiled coil. At Lys-160 the chain carries N6-acetyllysine. A helical membrane pass occupies residues 203–222 (VLWWSILQTLILVAIGVWQM). The Cytoplasmic segment spans residues 223-235 (RHLKSFFEAKKLV). The COPII vesicle coat-binding motif lies at 228–229 (FF). The COPI vesicle coat-binding motif lies at 228–235 (FFEAKKLV).

This sequence belongs to the EMP24/GP25L family. As to quaternary structure, monomer and homodimer in endoplasmic reticulum. Predominantly monomeric and to lesser extent homodimeric in endoplasmic reticulum-Golgi intermediate compartment and cis-Golgi network. Probably oligomerizes with other members of the EMP24/GP25L family such as TMED2, TMED7 and TMED10. Interacts with TMED5. Interacts (via C-terminus) with COPG1; the interaction involves dimeric TMED9. Interacts with PTPN2 and SPAST. Interacts with STX17; the interaction is direct. N-linked glycosylated containing high mannose.

The protein localises to the endoplasmic reticulum membrane. It localises to the golgi apparatus. It is found in the cis-Golgi network membrane. Its subcellular location is the endoplasmic reticulum-Golgi intermediate compartment membrane. The protein resides in the trans-Golgi network membrane. Its function is as follows. Appears to be involved in vesicular protein trafficking, mainly in the early secretory pathway. In COPI vesicle-mediated retrograde transport involved in the coatomer recruitment to membranes of the early secretory pathway. Increases coatomer-dependent activity of ARFGAP2. Thought to play a crucial role in the specific retention of p24 complexes in cis-Golgi membranes; specifically contributes to the coupled localization of TMED2 and TMED10 in the cis-Golgi network. May be involved in organization of intracellular membranes, such as of the ER-Golgi intermediate compartment and the Golgi apparatus. Involved in ER localization of PTPN2 isoform PTPB. This is Transmembrane emp24 domain-containing protein 9 (TMED9) from Homo sapiens (Human).